The primary structure comprises 416 residues: Esterase FrsA (416 aa).

The segment at 19–39 (ETSTLVRRTRHDQETQGLHST) is disordered.

The protein belongs to the FrsA family.

The enzyme catalyses a carboxylic ester + H2O = an alcohol + a carboxylate + H(+). Catalyzes the hydrolysis of esters. This is Esterase FrsA from Pectobacterium atrosepticum (strain SCRI 1043 / ATCC BAA-672) (Erwinia carotovora subsp. atroseptica).